Reading from the N-terminus, the 398-residue chain is Probable sugar efflux transporter (398 aa).

Transmembrane regions (helical) follow at residues 15-35 (VVTLAIAAFIFNTTEFVPVGL), 50-70 (VGIMLTIYAWVVALMSLPFML), 81-101 (LIGLFVLFIASHVLSFLAWNF), 103-123 (VLVISRIGIAFAHAIFWSITA), 136-156 (AQALSLLATGTALAMVLGLPI), 169-189 (TFFAIGLGALITLLCLIKLLP), 209-229 (PALMSIYLLTVVVVTAHYTAY), 246-266 (FATVLLLILGGAGIIGSVLFG), 275-295 (LLVSSAIGLLLACLLLLMPAA), 301-321 (LAILSIFWGVAIMIIGLGMQV), 333-353 (VAMSLFSGIFNIGIGAGALVG), and 364-384 (AIGYLGAIPALAALIWSILIF).

Belongs to the major facilitator superfamily. SotB (TC 2.A.1.2) family.

The protein localises to the cell inner membrane. In terms of biological role, involved in the efflux of sugars. The physiological role may be the reduction of the intracellular concentration of toxic sugars or sugar metabolites. The chain is Probable sugar efflux transporter from Enterobacter sp. (strain 638).